The primary structure comprises 660 residues: Bifunctional polymyxin resistance protein ArnA (660 aa).

Residues 1–304 (MKAVIFAYHD…TLGLVAGARL (304 aa)) are formyltransferase ArnAFT. Catalysis depends on H104, which acts as the Proton donor; for formyltransferase activity. (6R)-10-formyltetrahydrofolate is bound by residues R114 and 136–140 (VKRAD). Positions 314–660 (RRIRVLILGV…RSVDVAERAS (347 aa)) are dehydrogenase ArnADH. NAD(+)-binding positions include D347 and 368-369 (DI). UDP-alpha-D-glucuronate-binding positions include A393, Y398, and 432–433 (TS). The active-site Proton acceptor; for decarboxylase activity is E434. UDP-alpha-D-glucuronate-binding positions include R460, N492, 526–535 (KLIDGGQQKR), and Y613. R619 serves as the catalytic Proton donor; for decarboxylase activity.

It in the N-terminal section; belongs to the Fmt family. UDP-L-Ara4N formyltransferase subfamily. The protein in the C-terminal section; belongs to the NAD(P)-dependent epimerase/dehydratase family. UDP-glucuronic acid decarboxylase subfamily. As to quaternary structure, homohexamer, formed by a dimer of trimers.

It catalyses the reaction UDP-alpha-D-glucuronate + NAD(+) = UDP-beta-L-threo-pentopyranos-4-ulose + CO2 + NADH. The catalysed reaction is UDP-4-amino-4-deoxy-beta-L-arabinose + (6R)-10-formyltetrahydrofolate = UDP-4-deoxy-4-formamido-beta-L-arabinose + (6S)-5,6,7,8-tetrahydrofolate + H(+). It functions in the pathway nucleotide-sugar biosynthesis; UDP-4-deoxy-4-formamido-beta-L-arabinose biosynthesis; UDP-4-deoxy-4-formamido-beta-L-arabinose from UDP-alpha-D-glucuronate: step 1/3. Its pathway is nucleotide-sugar biosynthesis; UDP-4-deoxy-4-formamido-beta-L-arabinose biosynthesis; UDP-4-deoxy-4-formamido-beta-L-arabinose from UDP-alpha-D-glucuronate: step 3/3. It participates in bacterial outer membrane biogenesis; lipopolysaccharide biosynthesis. Its function is as follows. Bifunctional enzyme that catalyzes the oxidative decarboxylation of UDP-glucuronic acid (UDP-GlcUA) to UDP-4-keto-arabinose (UDP-Ara4O) and the addition of a formyl group to UDP-4-amino-4-deoxy-L-arabinose (UDP-L-Ara4N) to form UDP-L-4-formamido-arabinose (UDP-L-Ara4FN). The modified arabinose is attached to lipid A and is required for resistance to polymyxin and cationic antimicrobial peptides. In Salmonella heidelberg (strain SL476), this protein is Bifunctional polymyxin resistance protein ArnA.